We begin with the raw amino-acid sequence, 3063 residues long: Collagen alpha-1(XII) chain (3063 aa).

Positions 1–23 (MRSRLPPALAALGAALLLSSIEA) are cleaved as a signal peptide. The 91-residue stretch at 27–117 (PPSDLNFKII…GQLTIQTGSS (91 aa)) folds into the Fibronectin type-III 1 domain. The 177-residue stretch at 140-316 (DLVFLVDGSW…DIQNEIISQV (177 aa)) folds into the VWFA 1 domain. An O-linked (Xyl...) (chondroitin sulfate) serine glycan is attached at S329. The 91-residue stretch at 336–426 (PPSNLIAMEV…SIMEKTQPMK (91 aa)) folds into the Fibronectin type-III 2 domain. A VWFA 2 domain is found at 440 to 616 (DIVFLVDGSY…RISFELTQSI (177 aa)). Fibronectin type-III domains follow at residues 634 to 722 (PPKD…TEEV), 725 to 816 (APRN…VRGN), 817 to 905 (PRDL…LEER), 907 to 998 (SPQD…LSQD), 999 to 1087 (SKTL…ASRF), and 1089 to 1179 (SPRN…TLSD). N-linked (GlcNAc...) asparagine glycosylation is present at N700. S798 is a glycosylation site (O-linked (Xyl...) (chondroitin sulfate) serine). Positions 799–830 (GPGTPLTGNAATEEVRGNPRDLRVSDPTTSTM) are disordered. Positions 811 to 822 (EEVRGNPRDLRV) are enriched in basic and acidic residues. The Cell attachment site signature appears at 862 to 864 (RGD). O-linked (Xyl...) (chondroitin sulfate) serine glycosylation is found at S889 and S981. The disordered stretch occupies residues 1077–1099 (RQGSGTTASRFKSPRNLKTSDPT). Residues 1079–1099 (GSGTTASRFKSPRNLKTSDPT) show a composition bias toward polar residues. The 173-residue stretch at 1199-1371 (DIVLLVDGSW…ESLSRIVDDL (173 aa)) folds into the VWFA 3 domain. Fibronectin type-III domains lie at 1387–1476 (APSN…LPVP), 1477–1567 (VVSL…LPLP), 1568–1658 (RPQD…VPAP), 1659–1754 (TNLK…APKS), 1755–1849 (GPRN…TVRN), 1850–1935 (LRVY…LMRG), 1936–2026 (LARN…LPRS), 2027–2117 (GPRN…VGLL), 2118–2206 (PPQN…LYLN), and 2207–2294 (VTDL…TVKP). N-linked (GlcNAc...) asparagine glycosylation is present at N1763. N2206 carries N-linked (GlcNAc...) asparagine glycosylation. The interval 2283–2312 (GVSVKEHTTVKPTEAPTEPPTPPPPPTIPP) is disordered. Positions 2299-2311 (TEPPTPPPPPTIP) are enriched in pro residues. The VWFA 4 domain maps to 2323–2496 (DIVFLTDASW…ESFEKIEDNL (174 aa)). A nonhelical region (NC3) region spans residues 2451-2746 (SGFSVFVVGV…NSCTCTQDSV (296 aa)). The 193-residue stretch at 2520 to 2712 (GFKMLEAYNL…IQSFDIVCSP (193 aa)) folds into the Laminin G-like domain. Residues N2528 and N2679 are each glycosylated (N-linked (GlcNAc...) asparagine). Disordered regions lie at residues 2743–2896 (QDSV…GDRG) and 2932–3063 (NDYQ…PGSG). Collagen-like domains are found at residues 2747 to 2798 (GPPG…GPNG), 2802 to 2852 (PGEQ…AMGP), 2853 to 2898 (RGPP…RGDI), and 2941 to 2990 (PGPP…GERG). The triple-helical region (COL2) with 1 imperfection stretch occupies residues 2747-2898 (GPPGPPGPAG…KGEKGDRGDI (152 aa)). The short motif at 2779-2781 (RGD) is the Cell attachment site element. Residues 2784-2794 (PPGPQGPPGPQ) show a composition bias toward pro residues. Residues 2817–2826 (PGLPGRTGTP) are compositionally biased toward low complexity. Composition is skewed to pro residues over residues 2828–2837 (LPGPPGPMGP) and 2853–2862 (RGPPGPPGSP). Residues 2864 to 2874 (SPGVTGPSGKP) are compositionally biased toward low complexity. Positions 2895–2897 (RGD) match the Cell attachment site motif. Residues 2899 to 2941 (ASQNMMRAVARQVCEQLISGQMNRFNQMLNQIPNDYQSSRNQP) are nonhelical region (NC2). Pro residues predominate over residues 2941–2950 (PGPPGPPGPP). The segment at 2942–3044 (GPPGPPGPPG…RGPPGPPGYC (103 aa)) is triple-helical region (COL1) with 2 imperfections. A 4-hydroxyproline mark is found at P2944, P2947, P2950, P2959, P2965, P2968, P2971, P2983, P3000, P3003, P3014, P3023, P3026, and P3029. The segment covering 2957–2966 (GEPGPGGRPG) has biased composition (gly residues). Positions 3006-3020 (QGESRTGPPGSTGSR) are enriched in low complexity. Positions 3045–3063 (DSSQCASIPYNGQGYPGSG) are nonhelical region (NC1).

This sequence belongs to the fibril-associated collagens with interrupted helices (FACIT) family. As to quaternary structure, trimer of identical chains each containing 190 kDa of non-triple-helical sequences. Post-translationally, the triple-helical tail is stabilized by disulfide bonds at each end. In terms of processing, hydroxylation on proline residues within the sequence motif, GXPG, is most likely to be 4-hydroxy as this fits the requirement for 4-hydroxylation in vertebrates. Isoform 1 O-glycosylation; glycosaminoglycan of chondroitin-sulfate type. As to expression, found in collagen I-containing tissues: both isoform 1 and isoform 2 appear in amnion, chorion, skeletal muscle, small intestine, and in cell culture of dermal fibroblasts, keratinocytes and endothelial cells. Only isoform 2 is found in lung, placenta, kidney and a squamous cell carcinoma cell line. Isoform 1 is also present in the corneal epithelial Bowman's membrane (BM) and the interfibrillar matrix of the corneal stroma, but it is not detected in the limbal BM.

Its subcellular location is the secreted. The protein localises to the extracellular space. It localises to the extracellular matrix. Functionally, type XII collagen interacts with type I collagen-containing fibrils, the COL1 domain could be associated with the surface of the fibrils, and the COL2 and NC3 domains may be localized in the perifibrillar matrix. This chain is Collagen alpha-1(XII) chain (COL12A1), found in Homo sapiens (Human).